A 387-amino-acid chain; its full sequence is 3-ketoacyl-CoA thiolase (387 aa).

Cys-91 (acyl-thioester intermediate) is an active-site residue. Active-site proton acceptor residues include His-343 and Cys-373.

The protein belongs to the thiolase-like superfamily. Thiolase family. As to quaternary structure, heterotetramer of two alpha chains (FadB) and two beta chains (FadA).

It localises to the cytoplasm. The catalysed reaction is an acyl-CoA + acetyl-CoA = a 3-oxoacyl-CoA + CoA. It functions in the pathway lipid metabolism; fatty acid beta-oxidation. In terms of biological role, catalyzes the final step of fatty acid oxidation in which acetyl-CoA is released and the CoA ester of a fatty acid two carbons shorter is formed. This Shewanella baltica (strain OS155 / ATCC BAA-1091) protein is 3-ketoacyl-CoA thiolase.